The following is a 117-amino-acid chain: Large ribosomal subunit protein bL20 (117 aa).

The protein belongs to the bacterial ribosomal protein bL20 family.

Binds directly to 23S ribosomal RNA and is necessary for the in vitro assembly process of the 50S ribosomal subunit. It is not involved in the protein synthesizing functions of that subunit. The chain is Large ribosomal subunit protein bL20 from Histophilus somni (strain 129Pt) (Haemophilus somnus).